Consider the following 429-residue polypeptide: Zygotic gap protein knirps (429 aa).

The segment at residues 2–78 (NQTCKVCGEP…VGMSKGGSRY (77 aa)) is a DNA-binding region (nuclear receptor). NR C4-type zinc fingers lie at residues 5–25 (CKVC…CEGC) and 42–66 (CKNE…LRKC). Positions 112-126 (SVGGAPSASSPVGSP) are enriched in low complexity. Disordered stretches follow at residues 112–148 (SVGG…QQQQ), 223–250 (QSVD…SSAR), 338–357 (TSRS…QEVE), and 375–397 (SSSS…AEVK). Composition is skewed to polar residues over residues 225–237 (VDSV…FSPA) and 338–349 (TSRSSVHSFNDS). Residues 375–393 (SSSSSSHSAAHSPNTTTAH) show a composition bias toward low complexity.

The protein belongs to the nuclear hormone receptor family. NR0 subfamily.

It localises to the nucleus. Its function is as follows. Transcriptional repressor. Binds to multiple sites in the eve stripe 3 enhancer element. Plays an essential role in the segmentation process both by refining the expression patterns of gap genes and by establishing pair-rules stripes of gene expression. The polypeptide is Zygotic gap protein knirps (kni) (Drosophila melanogaster (Fruit fly)).